A 200-amino-acid chain; its full sequence is CASP-like protein 1D2 (200 aa).

The disordered stretch occupies residues 1–26 (MASTENPDPETGKSEPIPASATTPPP). At 1-36 (MASTENPDPETGKSEPIPASATTPPPSAASFLDCRK) the chain is on the cytoplasmic side. Residues 37–57 (IDVIIRVLLFSATLTALIVMV) form a helical membrane-spanning segment. Over 58–85 (TSDQTEKTQLPGVSSPAPVSAEFNDSPA) the chain is Extracellular. A helical transmembrane segment spans residues 86 to 106 (FIFFVVALVVTSFYALMSTLV). At 107 to 129 (SISLLLKPEFTARVSVYLASLDM) the chain is on the cytoplasmic side. The helical transmembrane segment at 130-150 (VMLGILASATGTAGGVAYIAL) threads the bilayer. Over 151-171 (KGNKEVGWNKICNVYDKFCRY) the chain is Extracellular. Residues 172-192 (IATSLALSLFATLLLLVLSIC) traverse the membrane as a helical segment. Residues 193 to 200 (SALSKRTP) are Cytoplasmic-facing.

It belongs to the Casparian strip membrane proteins (CASP) family. As to quaternary structure, homodimer and heterodimers.

It is found in the cell membrane. The protein is CASP-like protein 1D2 of Arabidopsis lyrata subsp. lyrata (Lyre-leaved rock-cress).